Here is a 486-residue protein sequence, read N- to C-terminus: Monocarboxylate transporter 12 (486 aa).

The Cytoplasmic segment spans residues 1–9 (MTKITRVGS). The next 6 membrane-spanning stretches (helical) occupy residues 10–30 (ASPP…LVTI), 58–78 (AWIH…GSVV), 86–106 (AGIM…SFAT), 115–135 (LGVL…AMVG), 148–168 (IAMS…QLLI), and 177–197 (LLIL…MRPI). Residues 201-220 (EDPSGPEKSHDRDAQREDCK) are compositionally biased toward basic and acidic residues. The interval 201–221 (EDPSGPEKSHDRDAQREDCKQ) is disordered. A run of 6 helical transmembrane segments spans residues 253 to 273 (FVVL…LFVY), 289 to 309 (AFLM…FGWL), 320 to 340 (YVCY…LPML), 353 to 373 (FGYF…EIVG), 383 to 403 (VVYF…GWLV), and 410 to 430 (TAAF…LGFA). The Cytoplasmic segment spans residues 431 to 486 (KIAKRMKRTQVPFLVKDSDPKLHLWTNGSVAYSIAKELDQKDEESLAKARTGCNLT).

It belongs to the major facilitator superfamily. Monocarboxylate porter (TC 2.A.1.13) family. As to quaternary structure, interacts with isoform 2 of BSG; this interaction is required for its localization to the plasma membrane. Detected in kidney, choroid plexus, testis, lung, stomach, large and small intestine, spleen, fat and parotid gland. In eye, expressed in cornea, ciliary epithelium, lens epithelium and lens fiber.

The protein localises to the cell membrane. Its subcellular location is the basolateral cell membrane. The enzyme catalyses creatine(in) = creatine(out). The catalysed reaction is guanidinoacetate(in) = guanidinoacetate(out). With respect to regulation, creatine uptake is inhibited by carbonyl cyanide 3-chlorophenylhydrazone (CCCP) and by valinomycin. Functionally, functions as a transporter for creatine and as well for its precursor guanidinoacetate. Transport of creatine and GAA is independent of resting membrane potential and extracellular Na(+), Cl(-), or pH. Contributes to the process of creatine biosynthesis and distribution. The chain is Monocarboxylate transporter 12 from Rattus norvegicus (Rat).